We begin with the raw amino-acid sequence, 444 residues long: Spermidine/putrescine import ATP-binding protein PotA (444 aa).

The ABC transporter domain maps to 11 to 332 (ISLVDVDKEF…PVNKWVANFI (322 aa)). Residue 43-50 (GPSGSGKT) participates in ATP binding. The segment at 111–201 (RIKKKAEEIP…ESFKKKYLTR (91 aa)) is insert.

Belongs to the ABC transporter superfamily. Spermidine/putrescine importer (TC 3.A.1.11.1) family. In terms of assembly, the complex is composed of two ATP-binding proteins (PotA), two transmembrane proteins (PotB and PotC) and a solute-binding protein (PotD).

Its subcellular location is the cell membrane. It carries out the reaction ATP + H2O + polyamine-[polyamine-binding protein]Side 1 = ADP + phosphate + polyamineSide 2 + [polyamine-binding protein]Side 1.. Part of the ABC transporter complex PotABCD involved in spermidine/putrescine import. Responsible for energy coupling to the transport system. The chain is Spermidine/putrescine import ATP-binding protein PotA from Mesomycoplasma hyopneumoniae (strain 232) (Mycoplasma hyopneumoniae).